Here is a 56-residue protein sequence, read N- to C-terminus: Large ribosomal subunit protein bL32c (56 aa).

The protein belongs to the bacterial ribosomal protein bL32 family.

The protein localises to the plastid. The protein resides in the chloroplast. This chain is Large ribosomal subunit protein bL32c, found in Huperzia lucidula (Shining clubmoss).